The sequence spans 778 residues: LPS-assembly protein LptD (778 aa).

The N-terminal stretch at 1–23 is a signal peptide; it reads MKTRYSVLSVAMTAAFYTQYAQA.

It belongs to the LptD family. Component of the lipopolysaccharide transport and assembly complex. Interacts with LptE and LptA.

It is found in the cell outer membrane. In terms of biological role, together with LptE, is involved in the assembly of lipopolysaccharide (LPS) at the surface of the outer membrane. The polypeptide is LPS-assembly protein LptD (Actinobacillus pleuropneumoniae serotype 7 (strain AP76)).